The chain runs to 206 residues: uncharacterized protein (206 aa).

The 170-residue stretch at 32 to 201 (VYIDAGHGGE…AADAIVNGID (170 aa)) folds into the MurNAc-LAA domain.

It belongs to the N-acetylmuramoyl-L-alanine amidase 3 family.

This is an uncharacterized protein from Bacillus subtilis (strain 168).